Reading from the N-terminus, the 261-residue chain is Acetylglutamate kinase (261 aa).

Substrate-binding positions include 48–49 (GG), Arg70, and Asn164.

It belongs to the acetylglutamate kinase family. ArgB subfamily.

It is found in the cytoplasm. It catalyses the reaction N-acetyl-L-glutamate + ATP = N-acetyl-L-glutamyl 5-phosphate + ADP. It participates in amino-acid biosynthesis; L-arginine biosynthesis; N(2)-acetyl-L-ornithine from L-glutamate: step 2/4. Its function is as follows. Catalyzes the ATP-dependent phosphorylation of N-acetyl-L-glutamate. The polypeptide is Acetylglutamate kinase (Roseiflexus sp. (strain RS-1)).